A 314-amino-acid polypeptide reads, in one-letter code: Leucotoxin LukE (314 aa).

The signal sequence occupies residues 1-28; that stretch reads MFKKKMLAASLSVGLIAPLASPIQESRA.

It belongs to the aerolysin family. Toxicity requires sequential binding and synergistic association of a class S and a class F component which form heterooligomeric complexes. LukE (class S) associates with LukD (class F). LukE can also associate with HlgB.

The protein resides in the secreted. In terms of biological role, part of a bi-component leucotoxin that acts by forming pores in the membrane of the target cells. LukE-LukD is as effective as the Panton-Valentine leucocidin (PVL) for inducing dermonecrosis when injected in the rabbit skin, but not hemolytic and poorly leucotoxic on human blood cells compared to other leucotoxins expressed by S.aureus. The polypeptide is Leucotoxin LukE (lukE) (Staphylococcus aureus).